Here is a 358-residue protein sequence, read N- to C-terminus: Myb family transcription factor IPN2 (358 aa).

Residues 1 to 20 (MERMFPPKKPSTMNSHDRPM) are disordered. The 61-residue stretch at 32–92 (TDPKPRLRWT…HLQKFRLGKQ (61 aa)) folds into the HTH myb-type domain. A DNA-binding region (H-T-H motif) is located at residues 63–88 (PKTIMRVMGVKGLTLYHLKSHLQKFR). A coiled-coil region spans residues 127–171 (NMNEMQIEVQRRLHEQLEVQKHLQLRIEAQGKYMQSILEKAYQTL). The LHEQLE signature appears at 139–144 (LHEQLE). Residues 310–358 (IYDSKPEEKKFDASMKLERPSPRRAPLGERMSPMITTGTMAQGRSSPFG) are disordered. The segment covering 311–330 (YDSKPEEKKFDASMKLERPS) has biased composition (basic and acidic residues). Polar residues predominate over residues 343–358 (MITTGTMAQGRSSPFG).

This sequence belongs to the MYB-CC family. As to quaternary structure, interacts with NSP2. In terms of tissue distribution, expressed in leaves, stems, nodules and roots.

The protein resides in the nucleus. In terms of biological role, transcriptional regulator required for Nod-factor-induced gene expression. Transcription activator involved in the induction of NIN and ENOD40 genes, which are required for rhizobial infection and early nodule development. Possesses strong transactivation activity in vitro. Does not seem to contribute to the early steps of the arbuscular mycorrhizal fungus infection and colonization processes in roots. This chain is Myb family transcription factor IPN2, found in Lotus japonicus (Lotus corniculatus var. japonicus).